The sequence spans 637 residues: 1,4-alpha-glucan branching enzyme GlgB (637 aa).

The active-site Nucleophile is the aspartate 307. The Proton donor role is filled by glutamate 361.

Belongs to the glycosyl hydrolase 13 family. GlgB subfamily. In terms of assembly, monomer.

It catalyses the reaction Transfers a segment of a (1-&gt;4)-alpha-D-glucan chain to a primary hydroxy group in a similar glucan chain.. It participates in glycan biosynthesis; glycogen biosynthesis. Catalyzes the formation of the alpha-1,6-glucosidic linkages in glycogen by scission of a 1,4-alpha-linked oligosaccharide from growing alpha-1,4-glucan chains and the subsequent attachment of the oligosaccharide to the alpha-1,6 position. The chain is 1,4-alpha-glucan branching enzyme GlgB from Oceanobacillus iheyensis (strain DSM 14371 / CIP 107618 / JCM 11309 / KCTC 3954 / HTE831).